Consider the following 240-residue polypeptide: Transcriptional regulatory protein rxt2 (240 aa).

Belongs to the RXT2 family. Component of the RPD3C(L) complex.

It is found in the nucleus. Its function is as follows. Component of the RPD3C(L) histone deacetylase complex (HDAC) responsible for the deacetylation of lysine residues on the N-terminal part of the core histones (H2A, H2B, H3 and H4). Histone deacetylation gives a tag for epigenetic repression and plays an important role in transcriptional regulation, cell cycle progression and developmental events. The protein is Transcriptional regulatory protein rxt2 (rtx2) of Schizosaccharomyces pombe (strain 972 / ATCC 24843) (Fission yeast).